A 207-amino-acid polypeptide reads, in one-letter code: Thiamine-phosphate synthase (207 aa).

4-amino-2-methyl-5-(diphosphooxymethyl)pyrimidine-binding positions include 37–41 and Asn-69; that span reads QLREK. 2 residues coordinate Mg(2+): Asp-70 and Asp-89. Position 108 (Ser-108) interacts with 4-amino-2-methyl-5-(diphosphooxymethyl)pyrimidine. 134 to 136 provides a ligand contact to 2-[(2R,5Z)-2-carboxy-4-methylthiazol-5(2H)-ylidene]ethyl phosphate; it reads TGS. Lys-137 lines the 4-amino-2-methyl-5-(diphosphooxymethyl)pyrimidine pocket. Residues Gly-165 and 185–186 each bind 2-[(2R,5Z)-2-carboxy-4-methylthiazol-5(2H)-ylidene]ethyl phosphate; that span reads IS.

Belongs to the thiamine-phosphate synthase family. Requires Mg(2+) as cofactor.

The catalysed reaction is 2-[(2R,5Z)-2-carboxy-4-methylthiazol-5(2H)-ylidene]ethyl phosphate + 4-amino-2-methyl-5-(diphosphooxymethyl)pyrimidine + 2 H(+) = thiamine phosphate + CO2 + diphosphate. It carries out the reaction 2-(2-carboxy-4-methylthiazol-5-yl)ethyl phosphate + 4-amino-2-methyl-5-(diphosphooxymethyl)pyrimidine + 2 H(+) = thiamine phosphate + CO2 + diphosphate. The enzyme catalyses 4-methyl-5-(2-phosphooxyethyl)-thiazole + 4-amino-2-methyl-5-(diphosphooxymethyl)pyrimidine + H(+) = thiamine phosphate + diphosphate. The protein operates within cofactor biosynthesis; thiamine diphosphate biosynthesis; thiamine phosphate from 4-amino-2-methyl-5-diphosphomethylpyrimidine and 4-methyl-5-(2-phosphoethyl)-thiazole: step 1/1. Functionally, condenses 4-methyl-5-(beta-hydroxyethyl)thiazole monophosphate (THZ-P) and 2-methyl-4-amino-5-hydroxymethyl pyrimidine pyrophosphate (HMP-PP) to form thiamine monophosphate (TMP). The protein is Thiamine-phosphate synthase of Desulfitobacterium hafniense (strain DSM 10664 / DCB-2).